A 451-amino-acid polypeptide reads, in one-letter code: MNLKVKQKIPLKIKRMGINGEGIGFYQKTLVFVPGALKGEDIYCQITSIRRNFVEAKLLKVNKKSKFRIVPSCTIYNECGGCQIMHLHYDKQLEFKTDLLHQALKKFAPAGYENYEIRPTIGMQEPKYYRAKLQFQTRKFKNQVKAGLYAQNSHYLVELKDCLVQDKETQVIANRLAELLTYHQIPITDERKVLGVRTIMVRRARKTGQVQIIIVTNRQLNLTQLVKELVKDFPEVVTVAVNTNTAKTSEIYGEKTEIIWGQESIQEGVLNYEFSLSPRAFYQLNPEQTEVLYSEAVKALDVDKEDHLIDAYCGVGTIGFAFAKKVKTLRGMDIIPEAIEDAKRNAKRMGFDNTHYEAGTAEEIIPRWYKEGYRADALIVDPPRTGLDDKLLDTILTYVPEKMVYISCNVSTLARDLVRLVEVYDLHYIQSVDMFPHTARTEAVVKLIKKV.

The 59-residue stretch at 2–60 (NLKVKQKIPLKIKRMGINGEGIGFYQKTLVFVPGALKGEDIYCQITSIRRNFVEAKLLK) folds into the TRAM domain. 4 residues coordinate [4Fe-4S] cluster: Cys-73, Cys-79, Cys-82, and Cys-162. Residues Gln-283, Tyr-312, Asp-333, and Asp-381 each coordinate S-adenosyl-L-methionine. Residue Cys-408 is the Nucleophile of the active site.

This sequence belongs to the class I-like SAM-binding methyltransferase superfamily. RNA M5U methyltransferase family.

This is an uncharacterized protein from Streptococcus pneumoniae serotype 4 (strain ATCC BAA-334 / TIGR4).